We begin with the raw amino-acid sequence, 108 residues long: Thiosulfate sulfurtransferase GlpE (108 aa).

Residues 17 to 105 enclose the Rhodanese domain; sequence RQGAAVLVDI…WHRRFPANVA (89 aa). Cys65 (cysteine persulfide intermediate) is an active-site residue.

This sequence belongs to the GlpE family.

The protein resides in the cytoplasm. The catalysed reaction is thiosulfate + hydrogen cyanide = thiocyanate + sulfite + 2 H(+). It catalyses the reaction thiosulfate + [thioredoxin]-dithiol = [thioredoxin]-disulfide + hydrogen sulfide + sulfite + 2 H(+). Transferase that catalyzes the transfer of sulfur from thiosulfate to thiophilic acceptors such as cyanide or dithiols. May function in a CysM-independent thiosulfate assimilation pathway by catalyzing the conversion of thiosulfate to sulfite, which can then be used for L-cysteine biosynthesis. This is Thiosulfate sulfurtransferase GlpE from Salmonella agona (strain SL483).